The primary structure comprises 206 residues: Guanylate kinase (206 aa).

The Guanylate kinase-like domain maps to 5-183 (FNLLILSGPS…SKEIILSIAK (179 aa)). Position 12–19 (12–19 (GPSGAGKS)) interacts with ATP.

The protein belongs to the guanylate kinase family.

It is found in the cytoplasm. It carries out the reaction GMP + ATP = GDP + ADP. Its function is as follows. Essential for recycling GMP and indirectly, cGMP. This chain is Guanylate kinase, found in Helicobacter pylori (strain HPAG1).